Here is a 166-residue protein sequence, read N- to C-terminus: Phosphopantetheine adenylyltransferase (166 aa).

Ser9 contacts substrate. ATP-binding positions include 9–10 (SF) and His17. Positions 41, 74, and 88 each coordinate substrate. ATP-binding positions include 89 to 91 (GLR), Glu99, and 124 to 130 (DSFISSS).

Belongs to the bacterial CoaD family. As to quaternary structure, homohexamer. Mg(2+) serves as cofactor.

Its subcellular location is the cytoplasm. The catalysed reaction is (R)-4'-phosphopantetheine + ATP + H(+) = 3'-dephospho-CoA + diphosphate. The protein operates within cofactor biosynthesis; coenzyme A biosynthesis; CoA from (R)-pantothenate: step 4/5. Reversibly transfers an adenylyl group from ATP to 4'-phosphopantetheine, yielding dephospho-CoA (dPCoA) and pyrophosphate. The protein is Phosphopantetheine adenylyltransferase of Lactobacillus gasseri (strain ATCC 33323 / DSM 20243 / BCRC 14619 / CIP 102991 / JCM 1131 / KCTC 3163 / NCIMB 11718 / NCTC 13722 / AM63).